A 548-amino-acid polypeptide reads, in one-letter code: Chaperonin GroEL (548 aa).

Residues 30–33 (TLGP), K51, 87–91 (DGTTT), G415, 478–480 (NAA), and D494 each bind ATP.

Belongs to the chaperonin (HSP60) family. As to quaternary structure, forms a cylinder of 14 subunits composed of two heptameric rings stacked back-to-back. Interacts with the co-chaperonin GroES.

It localises to the cytoplasm. The enzyme catalyses ATP + H2O + a folded polypeptide = ADP + phosphate + an unfolded polypeptide.. In terms of biological role, together with its co-chaperonin GroES, plays an essential role in assisting protein folding. The GroEL-GroES system forms a nano-cage that allows encapsulation of the non-native substrate proteins and provides a physical environment optimized to promote and accelerate protein folding. This is Chaperonin GroEL from Trichlorobacter lovleyi (strain ATCC BAA-1151 / DSM 17278 / SZ) (Geobacter lovleyi).